The chain runs to 385 residues: Acetate kinase (385 aa).

N8 contributes to the Mg(2+) binding site. ATP is bound at residue K15. Residue R85 participates in substrate binding. D142 (proton donor/acceptor) is an active-site residue. ATP is bound by residues H200–G204, D275–R277, and G323–N327. Mg(2+) is bound at residue E373.

The protein belongs to the acetokinase family. In terms of assembly, homodimer. It depends on Mg(2+) as a cofactor. Mn(2+) serves as cofactor.

It is found in the cytoplasm. It catalyses the reaction acetate + ATP = acetyl phosphate + ADP. It participates in metabolic intermediate biosynthesis; acetyl-CoA biosynthesis; acetyl-CoA from acetate: step 1/2. Functionally, catalyzes the formation of acetyl phosphate from acetate and ATP. Can also catalyze the reverse reaction. The polypeptide is Acetate kinase (Francisella tularensis subsp. holarctica (strain OSU18)).